Reading from the N-terminus, the 351-residue chain is Protein RecA (351 aa).

67 to 74 serves as a coordination point for ATP; the sequence is GPESSGKT.

Belongs to the RecA family.

It localises to the cytoplasm. Functionally, can catalyze the hydrolysis of ATP in the presence of single-stranded DNA, the ATP-dependent uptake of single-stranded DNA by duplex DNA, and the ATP-dependent hybridization of homologous single-stranded DNAs. It interacts with LexA causing its activation and leading to its autocatalytic cleavage. This is Protein RecA from Arthrobacter sp. (strain FB24).